A 507-amino-acid polypeptide reads, in one-letter code: MPWLLSAPKLVPAVANVRGLSGCMLCSQRRYSLQPVPERRIPNRYLGQPSPFTHPHLLRPGEVTPGLSQVEYALRRHKLMSLIQKEAQGQSGTDQTVVVLSNPTYYMSNDIPYTFHQDNNFLYLCGFQEPDSILVLQSLPGKQLPSHKAILFVPRRDPSRELWDGPRSGTDGAIALTGVDEAYTLEEFQHLLPKMKAETNMVWYDWMRPSHAQLHSDYMQPLTEAKAKSKNKVRGVQQLIQRLRLIKSPAEIERMQIAGKLTSQAFIETMFTSKAPVEEAFLYAKFEFECRARGADILAYPPVVAGGNRSNTLHYVKNNQLIKDGEMVLLDGGCESSCYVSDITRTWPVNGRFTAPQAELYEAVLEIQRDCLALCFPGTSLENIYSMMLTLIGQKLKDLGIMKNIKENNAFKAARKYCPHHVGHYLGMDVHDTPDMPRSLPLQPGMVITIEPGIYIPEDDKDAPEKFRGLGVRIEDDVVVTQDSPLILSADCPKEMNDIEQICSQAS.

The N-terminal 31 residues, 1–31 (MPWLLSAPKLVPAVANVRGLSGCMLCSQRRY), are a transit peptide targeting the mitochondrion. The interaction with TNFRSF1B stretch occupies residues 54 to 79 (HPHLLRPGEVTPGLSQVEYALRRHKL). Substrate contacts are provided by Tyr-300, Asp-331, Asp-342, His-424, His-431, Glu-451, and Glu-475. The Mn(2+) site is built by Asp-331, Asp-342, and His-424. Residues Glu-451 and Glu-475 each coordinate Mn(2+).

It belongs to the peptidase M24B family. Homodimer. Isoform 1 interacts with TNFRSF1B/TNFR2 (activated) and TRAF2. Mn(2+) is required as a cofactor. As to expression, isoform 1 and isoform 2 are widely expressed, with isoform 1 being more abundant.

It is found in the mitochondrion. Its subcellular location is the cytoplasm. The catalysed reaction is Release of any N-terminal amino acid, including proline, that is linked to proline, even from a dipeptide or tripeptide.. Functionally, catalyzes the removal of a penultimate prolyl residue from the N-termini of peptides, such as Leu-Pro-Ala. Also shows low activity towards peptides with Ala or Ser at the P1 position. In terms of biological role, promotes TNFRSF1B-mediated phosphorylation of MAPK8/JNK1 and MAPK9/JNK2, suggesting a function as an adapter protein for TNFRSF1B; the effect is independent of XPNPEP3 peptidase activity. May inhibit apoptotic cell death induced via TNF-TNFRSF1B signaling. The chain is Xaa-Pro aminopeptidase 3 (XPNPEP3) from Homo sapiens (Human).